Consider the following 153-residue polypeptide: uncharacterized protein (153 aa).

2 disordered regions span residues 30–66 (GPTVDTKRQELPILSEDSDGSDKEDEQPQVVVLRKGD) and 79–153 (IKEN…DYDD). A compositionally biased stretch (acidic residues) spans 45-56 (EDSDGSDKEDEQ). 2 stretches are compositionally biased toward polar residues: residues 106 to 116 (GDTTSGVNACS) and 130 to 144 (GTKSSQKQVKNSSLL).

This is an uncharacterized protein from Xenopus laevis (African clawed frog).